A 73-amino-acid polypeptide reads, in one-letter code: Defensin-like protein 10 (73 aa).

The N-terminal stretch at 1 to 28 (MKLSLRLISALLMSVMLLFATGMGPVEA) is a signal peptide. 4 disulfide bridges follow: Cys31/Cys73, Cys42/Cys62, Cys48/Cys67, and Cys52/Cys69.

Belongs to the DEFL family.

Its subcellular location is the secreted. In terms of biological role, confers broad-spectrum resistance to pathogens. The chain is Defensin-like protein 10 (PDF2.6) from Arabidopsis thaliana (Mouse-ear cress).